A 430-amino-acid chain; its full sequence is Lipoyl synthase, mitochondrial (430 aa).

Residues 1–37 (MAASTGKLRTLFSAHSSLSARPSSALPALRLTILRSY) constitute a mitochondrion transit peptide. The segment covering 40 to 56 (TTPPDSSISNPSNPSTT) has biased composition (low complexity). The disordered stretch occupies residues 40-64 (TTPPDSSISNPSNPSTTVKRPPTAF). [4Fe-4S] cluster-binding residues include Cys141, Cys146, Cys152, Cys172, Cys176, Cys179, and Ser387. A Radical SAM core domain is found at 155-376 (GSSKSAATAT…KERALEMGFL (222 aa)).

The protein belongs to the radical SAM superfamily. Lipoyl synthase family. The cofactor is [4Fe-4S] cluster.

The protein resides in the mitochondrion. It carries out the reaction [[Fe-S] cluster scaffold protein carrying a second [4Fe-4S](2+) cluster] + N(6)-octanoyl-L-lysyl-[protein] + 2 oxidized [2Fe-2S]-[ferredoxin] + 2 S-adenosyl-L-methionine + 4 H(+) = [[Fe-S] cluster scaffold protein] + N(6)-[(R)-dihydrolipoyl]-L-lysyl-[protein] + 4 Fe(3+) + 2 hydrogen sulfide + 2 5'-deoxyadenosine + 2 L-methionine + 2 reduced [2Fe-2S]-[ferredoxin]. Its pathway is protein modification; protein lipoylation via endogenous pathway; protein N(6)-(lipoyl)lysine from octanoyl-[acyl-carrier-protein]: step 2/2. Its function is as follows. Catalyzes the radical-mediated insertion of two sulfur atoms into the C-6 and C-8 positions of the octanoyl moiety bound to the lipoyl domains of lipoate-dependent enzymes, thereby converting the octanoylated domains into lipoylated derivatives. This is Lipoyl synthase, mitochondrial from Blastomyces gilchristii (strain SLH14081) (Blastomyces dermatitidis).